The sequence spans 177 residues: Adenine phosphoribosyltransferase (177 aa).

This sequence belongs to the purine/pyrimidine phosphoribosyltransferase family. As to quaternary structure, homodimer.

The protein localises to the cytoplasm. It catalyses the reaction AMP + diphosphate = 5-phospho-alpha-D-ribose 1-diphosphate + adenine. Its pathway is purine metabolism; AMP biosynthesis via salvage pathway; AMP from adenine: step 1/1. Functionally, catalyzes a salvage reaction resulting in the formation of AMP, that is energically less costly than de novo synthesis. This chain is Adenine phosphoribosyltransferase, found in Chlorobium phaeobacteroides (strain DSM 266 / SMG 266 / 2430).